The primary structure comprises 308 residues: Tetraspanin-12 (308 aa).

At Met1 to Ser41 the chain is on the cytoplasmic side. A helical transmembrane segment spans residues Val42–Trp62. The Extracellular portion of the chain corresponds to Ala63–Trp86. The helical transmembrane segment at Pro87 to Leu107 threads the bilayer. At Arg108–Ser112 the chain is on the cytoplasmic side. The helical transmembrane segment at Phe113–Val133 threads the bilayer. Over Phe134–Asn268 the chain is Extracellular. Residue Asn213 is glycosylated (N-linked (GlcNAc...) asparagine). The chain crosses the membrane as a helical span at residues Met269–Phe289. Over Ala290 to His308 the chain is Cytoplasmic.

It belongs to the tetraspanin (TM4SF) family. May interact with protease sup-17; the interaction promotes sup-17 cell membrane localization. As to expression, expressed in the germline.

It localises to the cell membrane. The protein localises to the cytoplasmic vesicle membrane. The protein resides in the endosome membrane. It is found in the early endosome membrane. Its subcellular location is the late endosome membrane. It localises to the recycling endosome membrane. The protein localises to the golgi apparatus. The protein resides in the trans-Golgi network membrane. In terms of biological role, functions redundantly with tsp-14 isoform a to regulate body size, embryonic and vulva development. Functions redundantly with tsp-14 (isoforms a and b) to regulate cell fate specification in the postembryonic mesodermal M lineage and male development. May regulate BMP-like Sma/Mab signaling by mediating protease sup-17 trafficking to the cell surface. Together with tsp-14, functions redundantly to maintain cell surface levels of the BMP type II receptor daf-4 (but not BMP type I receptor sma-6), probably by regulating endosomal sorting of receptors and their targeting to degradative lysosomes. Together with tsp-14 involved in maintaining the structural and functional integrity of the endosomal network. Together with tsp-14, probably acts by modulating the activation of glp-1, a Notch-like receptor, to regulate germline maturation. Probably acts by modulating the activation of lin-12, a Notch-like receptor, to regulate cell fate specification such as the anchor cell/ventral uterine precursor cell decision. This is Tetraspanin-12 from Caenorhabditis elegans.